Consider the following 231-residue polypeptide: Large ribosomal subunit protein uL1 (231 aa).

It belongs to the universal ribosomal protein uL1 family. As to quaternary structure, part of the 50S ribosomal subunit.

Binds directly to 23S rRNA. The L1 stalk is quite mobile in the ribosome, and is involved in E site tRNA release. Functionally, protein L1 is also a translational repressor protein, it controls the translation of the L11 operon by binding to its mRNA. The chain is Large ribosomal subunit protein uL1 from Hydrogenovibrio crunogenus (strain DSM 25203 / XCL-2) (Thiomicrospira crunogena).